The primary structure comprises 265 residues: Small ribosomal subunit protein eS4 (265 aa).

Residues 42 to 104 (LPLILIIRNR…TGENYRLLYD (63 aa)) enclose the S4 RNA-binding domain.

Belongs to the eukaryotic ribosomal protein eS4 family.

Its subcellular location is the cytoplasm. This chain is Small ribosomal subunit protein eS4 (RPS4), found in Oryza sativa subsp. japonica (Rice).